The following is a 362-amino-acid chain: Peptide chain release factor 1 (362 aa).

Gln235 is modified (N5-methylglutamine).

Belongs to the prokaryotic/mitochondrial release factor family. Post-translationally, methylated by PrmC. Methylation increases the termination efficiency of RF1.

It localises to the cytoplasm. Its function is as follows. Peptide chain release factor 1 directs the termination of translation in response to the peptide chain termination codons UAG and UAA. The protein is Peptide chain release factor 1 of Variovorax paradoxus (strain S110).